Here is a 231-residue protein sequence, read N- to C-terminus: uncharacterized protein (231 aa).

The signal sequence occupies residues 1 to 17; the sequence is MFGKILTTSLLIAMTFA. The disordered stretch occupies residues 197-231; it reads KARKQQKNEGDDEETEDEQKIGSAIDGWVERQAKL.

This is an uncharacterized protein from Caenorhabditis elegans.